The chain runs to 130 residues: Small ribosomal subunit protein uS9 (130 aa).

The tract at residues 109-130 is disordered; that stretch reads RAKERKKYGLKAARRAPQFSKR. Residues 111–130 show a composition bias toward basic residues; the sequence is KERKKYGLKAARRAPQFSKR.

Belongs to the universal ribosomal protein uS9 family.

The protein is Small ribosomal subunit protein uS9 of Heliobacterium modesticaldum (strain ATCC 51547 / Ice1).